The sequence spans 343 residues: 3-dehydroquinate synthase (343 aa).

NAD(+) is bound by residues 86–90, 110–111, lysine 123, and lysine 132; these read GALLD and TT. Glutamate 165, histidine 229, and histidine 243 together coordinate Zn(2+).

This sequence belongs to the sugar phosphate cyclases superfamily. Dehydroquinate synthase family. Co(2+) serves as cofactor. The cofactor is Zn(2+). Requires NAD(+) as cofactor.

It localises to the cytoplasm. The catalysed reaction is 7-phospho-2-dehydro-3-deoxy-D-arabino-heptonate = 3-dehydroquinate + phosphate. Its pathway is metabolic intermediate biosynthesis; chorismate biosynthesis; chorismate from D-erythrose 4-phosphate and phosphoenolpyruvate: step 2/7. Catalyzes the conversion of 3-deoxy-D-arabino-heptulosonate 7-phosphate (DAHP) to dehydroquinate (DHQ). This Pyrobaculum neutrophilum (strain DSM 2338 / JCM 9278 / NBRC 100436 / V24Sta) (Thermoproteus neutrophilus) protein is 3-dehydroquinate synthase.